The sequence spans 321 residues: tRNA-dihydrouridine synthase B (321 aa).

Residues 16 to 18 (PMA) and Q70 each bind FMN. C100 acts as the Proton donor in catalysis. FMN is bound by residues K139, 200–202 (NGD), and 224–225 (GR).

It belongs to the Dus family. DusB subfamily. It depends on FMN as a cofactor.

The enzyme catalyses a 5,6-dihydrouridine in tRNA + NAD(+) = a uridine in tRNA + NADH + H(+). It carries out the reaction a 5,6-dihydrouridine in tRNA + NADP(+) = a uridine in tRNA + NADPH + H(+). In terms of biological role, catalyzes the synthesis of 5,6-dihydrouridine (D), a modified base found in the D-loop of most tRNAs, via the reduction of the C5-C6 double bond in target uridines. The sequence is that of tRNA-dihydrouridine synthase B from Shigella flexneri.